Consider the following 451-residue polypeptide: C4-dicarboxylate transport protein (451 aa).

A run of 9 helical transmembrane segments spans residues 17–37 (SLYV…HFYP), 53–73 (LIKM…IAGM), 85–105 (LALL…LIVV), 153–173 (AFAK…GFAL), 193–213 (VLFT…FGAM), 231–251 (LMGS…GLIA), 306–326 (GYSF…VFIA), 339–359 (ITLL…TGSG), and 361–381 (IVLA…LALI).

This sequence belongs to the dicarboxylate/amino acid:cation symporter (DAACS) (TC 2.A.23) family.

The protein resides in the cell inner membrane. In terms of biological role, responsible for the transport of dicarboxylates such as succinate, fumarate, and malate from the periplasm across the membrane. In Paracidovorax citrulli (strain AAC00-1) (Acidovorax citrulli), this protein is C4-dicarboxylate transport protein.